The following is a 670-amino-acid chain: Catalase (670 aa).

Active-site residues include His-61 and Asn-132. Tyr-345 lines the heme pocket.

The protein belongs to the catalase family. Homotetramer. It depends on heme as a cofactor.

Its subcellular location is the peroxisome matrix. The catalysed reaction is 2 H2O2 = O2 + 2 H2O. Functionally, catalyzes the degradation of hydrogen peroxide (H(2)O(2)) generated by peroxisomal oxidases to water and oxygen, thereby protecting cells from the toxic effects of hydrogen peroxide. The chain is Catalase from Penicillium janthinellum (Penicillium vitale).